The following is a 348-amino-acid chain: Flap endonuclease 1 (348 aa).

An N-domain region spans residues 1-98 (MGLAELRELI…ETLERRRERK (98 aa)). Positions 28, 80, 149, 151, 170, 172, and 234 each coordinate Mg(2+). The segment at 113-256 (EREKYARQVA…RALQLIRKYG (144 aa)) is I-domain. Residues 340-348 (RQETLDAFF) are interaction with PCNA.

The protein belongs to the XPG/RAD2 endonuclease family. FEN1 subfamily. As to quaternary structure, interacts with PCNA. PCNA stimulates the nuclease activity without altering cleavage specificity. Mg(2+) serves as cofactor.

Structure-specific nuclease with 5'-flap endonuclease and 5'-3' exonuclease activities involved in DNA replication and repair. During DNA replication, cleaves the 5'-overhanging flap structure that is generated by displacement synthesis when DNA polymerase encounters the 5'-end of a downstream Okazaki fragment. Binds the unpaired 3'-DNA end and kinks the DNA to facilitate 5' cleavage specificity. Cleaves one nucleotide into the double-stranded DNA from the junction in flap DNA, leaving a nick for ligation. Also involved in the base excision repair (BER) pathway. Acts as a genome stabilization factor that prevents flaps from equilibrating into structures that lead to duplications and deletions. Also possesses 5'-3' exonuclease activity on nicked or gapped double-stranded DNA. The protein is Flap endonuclease 1 of Methanopyrus kandleri (strain AV19 / DSM 6324 / JCM 9639 / NBRC 100938).